Consider the following 380-residue polypeptide: Chaperone protein DnaJ (380 aa).

A disordered region spans residues 1-48; it reads MAKKDYYDTLGVPKNASDDDIKKAYRKLAMKHHPDRNQGDKSKVSEEK. The J domain occupies 5 to 72; that stretch reads DYYDTLGVPK…NKRMAYDQYG (68 aa). Positions 24-34 are enriched in basic residues; it reads AYRKLAMKHHP. Residues 35 to 48 are compositionally biased toward basic and acidic residues; that stretch reads DRNQGDKSKVSEEK. The CR-type zinc-finger motif lies at 139–217; the sequence is GKEAQIRIPS…CHGVGKTKNN (79 aa). Cys-152, Cys-155, Cys-169, Cys-172, Cys-191, Cys-194, Cys-205, and Cys-208 together coordinate Zn(2+). CXXCXGXG motif repeat units lie at residues 152–159, 169–176, 191–198, and 205–212; these read CNTCHGSG, CTTCHGHG, CPQCKGTG, and CVACHGVG. Residues 357-380 are disordered; the sequence is KKGGARHSPSEEGWADKLKSFFSA. The span at 364–380 shows a compositional bias: basic and acidic residues; the sequence is SPSEEGWADKLKSFFSA.

The protein belongs to the DnaJ family. Homodimer. Zn(2+) serves as cofactor.

It is found in the cytoplasm. In terms of biological role, participates actively in the response to hyperosmotic and heat shock by preventing the aggregation of stress-denatured proteins and by disaggregating proteins, also in an autonomous, DnaK-independent fashion. Unfolded proteins bind initially to DnaJ; upon interaction with the DnaJ-bound protein, DnaK hydrolyzes its bound ATP, resulting in the formation of a stable complex. GrpE releases ADP from DnaK; ATP binding to DnaK triggers the release of the substrate protein, thus completing the reaction cycle. Several rounds of ATP-dependent interactions between DnaJ, DnaK and GrpE are required for fully efficient folding. Also involved, together with DnaK and GrpE, in the DNA replication of plasmids through activation of initiation proteins. This chain is Chaperone protein DnaJ, found in Polaromonas sp. (strain JS666 / ATCC BAA-500).